Consider the following 297-residue polypeptide: Bifunctional protein FolD (297 aa).

Residues 164–166 (GRS), serine 193, and valine 234 each bind NADP(+).

This sequence belongs to the tetrahydrofolate dehydrogenase/cyclohydrolase family. In terms of assembly, homodimer.

It carries out the reaction (6R)-5,10-methylene-5,6,7,8-tetrahydrofolate + NADP(+) = (6R)-5,10-methenyltetrahydrofolate + NADPH. It catalyses the reaction (6R)-5,10-methenyltetrahydrofolate + H2O = (6R)-10-formyltetrahydrofolate + H(+). It participates in one-carbon metabolism; tetrahydrofolate interconversion. In terms of biological role, catalyzes the oxidation of 5,10-methylenetetrahydrofolate to 5,10-methenyltetrahydrofolate and then the hydrolysis of 5,10-methenyltetrahydrofolate to 10-formyltetrahydrofolate. This is Bifunctional protein FolD from Natronomonas pharaonis (strain ATCC 35678 / DSM 2160 / CIP 103997 / JCM 8858 / NBRC 14720 / NCIMB 2260 / Gabara) (Halobacterium pharaonis).